We begin with the raw amino-acid sequence, 87 residues long: U14-lycotoxin-Ls1a (87 aa).

A signal peptide spans 1 to 20 (MNSKVFAVLLLLALSTCVLS). A WAP domain is found at 21 to 66 (EKYCPTPRNTSCKKMNIRNNCCRDSDCTSNAFCCAEPCGNFCHKAS). 5 cysteine pairs are disulfide-bonded: cysteine 24–cysteine 54, cysteine 32–cysteine 58, cysteine 41–cysteine 53, cysteine 42–cysteine 80, and cysteine 47–cysteine 62.

Belongs to the venom protein 11 family. 01 (wap-1) subfamily. Contains 5 disulfide bonds. In terms of tissue distribution, expressed by the venom gland.

Its subcellular location is the secreted. In terms of biological role, has antibacterial activity. The sequence is that of U14-lycotoxin-Ls1a from Lycosa singoriensis (Wolf spider).